Consider the following 476-residue polypeptide: Probable pectin lyase F (476 aa).

The first 20 residues, 1 to 20 (MTLLRHLLTATALLGASVQA), serve as a signal peptide directing secretion. An intrachain disulfide couples C84 to C108. N103 and N131 each carry an N-linked (GlcNAc...) asparagine glycan. The active site involves R258. N-linked (GlcNAc...) asparagine glycosylation is found at N277 and N318. C325 and C333 are oxidised to a cystine. N-linked (GlcNAc...) asparagine glycosylation occurs at N385. The disordered stretch occupies residues 412–476 (FVPAYSEAGP…HHHQGHGRGY (65 aa)). A compositionally biased stretch (polar residues) spans 426-453 (VPTQPSWSWRTVTNGPAPTGAPSDSPSA). A compositionally biased stretch (basic residues) spans 465 to 476 (NKHHHQGHGRGY).

The protein belongs to the polysaccharide lyase 1 family.

It localises to the secreted. The enzyme catalyses Eliminative cleavage of (1-&gt;4)-alpha-D-galacturonan methyl ester to give oligosaccharides with 4-deoxy-6-O-methyl-alpha-D-galact-4-enuronosyl groups at their non-reducing ends.. Functionally, pectinolytic enzymes consist of four classes of enzymes: pectin lyase, polygalacturonase, pectin methylesterase and rhamnogalacturonase. Among pectinolytic enzymes, pectin lyase is the most important in depolymerization of pectin, since it cleaves internal glycosidic bonds of highly methylated pectins. This is Probable pectin lyase F (pelF) from Aspergillus niger (strain ATCC MYA-4892 / CBS 513.88 / FGSC A1513).